A 29-amino-acid polypeptide reads, in one-letter code: Small toxic protein ZorO (29 aa).

A helical membrane pass occupies residues 10-27; that stretch reads VLIAVLELLVALLRLIDL.

It localises to the cell inner membrane. In terms of biological role, toxic component of a type I toxin-antitoxin (TA) system. Expression in the absence of its cognate antitoxin (small sRNA orzO) leads to cell stasis and a decrease in colony-forming units. Repression of ZorO toxicity requires base pairing between zorO mRNA and sRNA OrzO, as well as RNase III (rnc), suggesting the mRNA is degraded. Base pairing occurs between 18 bases in the 5' UTR of zorO mRNA and the 5' end of OrzO sRNA. sRNA OrzP, which differs only in 4 of these 18 bases, does not repress ZorO toxicity. Integration of the protein into the inner membrane damages membrane integrity and affects membrane potential. It leads to increased levels of hydroxyl radicals. The chain is Small toxic protein ZorO from Escherichia coli O157:H7.